A 452-amino-acid chain; its full sequence is Gastrin/cholecystokinin type B receptor (452 aa).

Topologically, residues 1 to 57 (MELLKLNRSLPGPGPGAALCRPEGPLLNGSGAGNLSCEPPRIRGAGTRELELAVRIT) are extracellular. Asparagine 7, asparagine 28, and asparagine 34 each carry an N-linked (GlcNAc...) asparagine glycan. The helical transmembrane segment at 58–78 (LYAAIFLMSVAGNVLIIVVLG) threads the bilayer. Topologically, residues 79-99 (LSRRLRTVTNAFLLSLAVSDL) are cytoplasmic. The helical transmembrane segment at 100–120 (LLAVACMPFTLLPNLMGTFIF) threads the bilayer. The Extracellular segment spans residues 121-127 (GTVVCKA). Cysteines 125 and 203 form a disulfide. The helical transmembrane segment at 128 to 148 (VSYFMGVSVSVSTLSLVAIAL) threads the bilayer. At 149-171 (ERYSAICRPLQARVWQTRSHAAR) the chain is on the cytoplasmic side. The chain crosses the membrane as a helical span at residues 172–192 (VIVATWMLSGLLMVPYPVYTA). Over 193 to 218 (VQPAGPRVLQCMHRWPSARIRQTWSV) the chain is Extracellular. The chain crosses the membrane as a helical span at residues 219-239 (LLLLLLFFVPGVVMAVAYGLI). The Cytoplasmic segment spans residues 240 to 339 (SRELYLGLRF…LLAKKRVVRM (100 aa)). Residues 256–285 (ESQSQVGSQGGLPGGAGQGPAHPNGHCRSE) form a disordered region. Over residues 263–273 (SQGGLPGGAGQ) the composition is skewed to gly residues. The chain crosses the membrane as a helical span at residues 340–360 (LLVIVVLFFLCWLPVYSANTW). Residues 361–376 (RAFDGPGAHRALSGAP) are Extracellular-facing. A helical membrane pass occupies residues 377–397 (ISFIHLLSYASACVNPLVYCF). Over 398–452 (MHRRFRQACLDTCARCCPRPPRARPRPLPDEDPPTPSIASLSRLSYTTISTLGPG) the chain is Cytoplasmic. Residue cysteine 413 is the site of S-palmitoyl cysteine attachment.

It belongs to the G-protein coupled receptor 1 family.

The protein localises to the cell membrane. Functionally, receptor for gastrin and cholecystokinin. The CCK-B receptors occur throughout the central nervous system where they modulate anxiety, analgesia, arousal, and neuroleptic activity. This receptor mediates its action by association with G proteins that activate a phosphatidylinositol-calcium second messenger system. This is Gastrin/cholecystokinin type B receptor from Sus scrofa (Pig).